A 314-amino-acid polypeptide reads, in one-letter code: Oxaloacetate tautomerase FAHD2A, mitochondrial (314 aa).

A mitochondrion-targeting transit peptide spans 1 to 84 (MLGSSGRRLL…ATLSVVRRAL (84 aa)). 3 residues coordinate Mg(2+): E159, E161, and D190.

The protein belongs to the FAH family. Requires Mg(2+) as cofactor. It depends on Mn(2+) as a cofactor.

The protein resides in the mitochondrion. The catalysed reaction is oxaloacetate = enol-oxaloacetate. Its function is as follows. Tautomerase that converts enol-oxaloacetate, a strong inhibitor of succinate dehydrogenase, to the physiological keto form of oxaloacetate. It is thereby required to maximize aerobic respiration efficiency by preventing succinate dehydrogenase inhibition. The chain is Oxaloacetate tautomerase FAHD2A, mitochondrial from Bos taurus (Bovine).